The sequence spans 163 residues: Photosystem II extrinsic protein V (163 aa).

An N-terminal signal peptide occupies residues 1–26; the sequence is MFRRLIGVVVATALLTFQLIVGSATA. Residues C63, C66, H67, and H118 each coordinate heme c.

The protein belongs to the cytochrome c family. PsbV subfamily. As to quaternary structure, PSII is composed of 1 copy each of membrane proteins PsbA, PsbB, PsbC, PsbD, PsbE, PsbF, PsbH, PsbI, PsbJ, PsbK, PsbL, PsbM, PsbT, PsbX, PsbY, PsbZ, Psb30/Ycf12, peripheral proteins PsbO, CyanoQ (PsbQ), PsbU, PsbV and a large number of cofactors. It forms dimeric complexes. Heme c serves as cofactor.

Its subcellular location is the cellular thylakoid membrane. Functionally, one of the extrinsic, lumenal subunits of photosystem II (PSII). PSII is a light-driven water plastoquinone oxidoreductase, using light energy to abstract electrons from H(2)O, generating a proton gradient subsequently used for ATP formation. The extrinsic proteins stabilize the structure of photosystem II oxygen-evolving complex (OEC), the ion environment of oxygen evolution and protect the OEC against heat-induced inactivation. Low-potential cytochrome c that plays a role in the OEC of PSII. The polypeptide is Photosystem II extrinsic protein V (Nostoc sp. (strain PCC 7120 / SAG 25.82 / UTEX 2576)).